A 708-amino-acid polypeptide reads, in one-letter code: Fatty acid oxidation complex subunit alpha (708 aa).

Residues 1–191 are enoyl-CoA hydratase; the sequence is MDNNNAFQLS…KLGVVDACVP (191 aa). A 3-hydroxyacyl-CoA dehydrogenase region spans residues 311–708; sequence APVAAVGVLG…RAGLGEKFYP (398 aa).

The protein in the N-terminal section; belongs to the enoyl-CoA hydratase/isomerase family. In the central section; belongs to the 3-hydroxyacyl-CoA dehydrogenase family. In terms of assembly, heterotetramer of two alpha chains (FadJ) and two beta chains (FadI).

The protein resides in the cytoplasm. It catalyses the reaction a (3S)-3-hydroxyacyl-CoA = a (2E)-enoyl-CoA + H2O. It carries out the reaction a 4-saturated-(3S)-3-hydroxyacyl-CoA = a (3E)-enoyl-CoA + H2O. The catalysed reaction is a (3S)-3-hydroxyacyl-CoA + NAD(+) = a 3-oxoacyl-CoA + NADH + H(+). The enzyme catalyses (3S)-3-hydroxybutanoyl-CoA = (3R)-3-hydroxybutanoyl-CoA. The protein operates within lipid metabolism; fatty acid beta-oxidation. In terms of biological role, catalyzes the formation of a hydroxyacyl-CoA by addition of water on enoyl-CoA. Also exhibits 3-hydroxyacyl-CoA epimerase and 3-hydroxyacyl-CoA dehydrogenase activities. The chain is Fatty acid oxidation complex subunit alpha from Vibrio cholerae serotype O1 (strain ATCC 39315 / El Tor Inaba N16961).